Here is a 94-residue protein sequence, read N- to C-terminus: MIKNYRKKFWKNSTTKSQNFIELNDIAYGNLIRVDIEAYRENVIVYRCINLIAQSAGHVPWKVLKSKTGEVIFRLSGALFTNKTESQKSRSGFC.

This sequence belongs to the phage portal family. HK97 subfamily.

This is an uncharacterized protein from Rickettsia conorii (strain ATCC VR-613 / Malish 7).